The following is a 1148-amino-acid chain: Small G protein signaling modulator 1 (1148 aa).

One can recognise an RUN domain in the interval 36–190 (HEDSSHIISF…EYTKMKTADH (155 aa)). An important for interaction with RAB9A and RAB9B region spans residues 256 to 297 (LLYGKNNVLVQPRDDMEAVPGYLSLHQTADVMTLKWTPNQLM). The segment at 301-350 (VGDLDYEKSVYWDYAMTIRLEEIVYLHCHQQVDSGGTVVLVSQDGIQRPP) is required for interaction with RAP family members. 3 disordered regions span residues 377–411 (DPPLWSQRGKGKVFPKLRKRSPQGSAESTSSDKDD), 700–830 (DSTI…PREE), and 871–894 (GWRSSETEKHGQADSEDNLSEEPE). Basic residues predominate over residues 385 to 397 (GKGKVFPKLRKRS). The 465-residue stretch at 617 to 1081 (GIQPEIRKAV…LVWETIWAAK (465 aa)) folds into the Rab-GAP TBC domain. Positions 702–716 (TISNESSQSCSSGRQ) are enriched in polar residues. Residues 742 to 751 (AEGRLEEKQP) show a composition bias toward basic and acidic residues. Positions 757 to 802 (NLVNGTCSPDSGHPSSHNFSSGLSEHSEPSLSTEDSVLDAQRNTPT) are enriched in polar residues. Composition is skewed to basic and acidic residues over residues 805 to 816 (RPRDGSVDDRQS) and 871 to 883 (GWRSSETEKHGQA). Acidic residues predominate over residues 884–894 (DSEDNLSEEPE).

Belongs to the RUTBC family. Interacts with RAB9A (GTP-bound form) and RAB9B (GTP-bound form); has much lower affinity for GDP-bound RAB9A and RAB9B. Interacts with RAB3A, RAB4A, RAB5A, RAB8A, RAB11A, RAP1A, RAP1B, RAP2A and RAP2B. No interaction with RAB27A. In terms of tissue distribution, mainly expressed in brain, heart and testis.

Its subcellular location is the golgi apparatus. It is found in the trans-Golgi network. It localises to the cytoplasmic vesicle membrane. The protein resides in the cytoplasm. Interacts with numerous Rab family members, functioning as Rab effector for some, and as GTPase activator for others. Promotes GTP hydrolysis by RAB34 and RAB36. Probably functions as a GTPase effector with RAB9A and RAB9B; does not stimulate GTP hydrolysis with RAB9A and RAB9B. This is Small G protein signaling modulator 1 (SGSM1) from Homo sapiens (Human).